The sequence spans 247 residues: Chromosome partition protein MukE (247 aa).

The disordered stretch occupies residues 213–247; the sequence is AQSLQEEKNGLKDNMDQSAVENEQYFENEENEGIA. Over residues 217 to 227 the composition is skewed to basic and acidic residues; it reads QEEKNGLKDNM. The segment covering 236-247 has biased composition (acidic residues); sequence QYFENEENEGIA.

The protein belongs to the MukE family. In terms of assembly, interacts, and probably forms a ternary complex, with MukF and MukB. The complex formation is stimulated by calcium or magnesium.

The protein localises to the cytoplasm. The protein resides in the nucleoid. Its function is as follows. Involved in chromosome condensation, segregation and cell cycle progression. May participate in facilitating chromosome segregation by condensation DNA from both sides of a centrally located replisome during cell division. Probably acts via its interaction with MukB and MukF. This Histophilus somni (strain 2336) (Haemophilus somnus) protein is Chromosome partition protein MukE.